We begin with the raw amino-acid sequence, 342 residues long: MAGSGGLGGGAGGGQGAGAGQGAALRASRAPMLLVALVLGAYCLCALPGRCPPAARAPAPAPAPSEPSSSVHRPGAPGLPLASGPGRRRFPQALIVGVKKGGTRALLEFLRLHPDVRALGSEPHFFDRCYERGLAWYRSLMPRTLDGQITMEKTPSYFVTREAPRRIHAMSPDTKLIVVVRNPVTRAISDYAQTLSKTPGLPSFRALAFRHGLGPVDTAWSAVRIGLYAQHLDHWLRYFPLSHFLFVSGERLVSDPAGEVGRVQDFLGLKRVVTDKHFYFNATKGFPCLKKAQGGSRPRCLGKSKGRPHPRVPQALVRRLQEFYRPFNRRFYQMTGQDFGWG.

The segment at 1–21 is disordered; it reads MAGSGGLGGGAGGGQGAGAGQ. Over 1 to 31 the chain is Cytoplasmic; that stretch reads MAGSGGLGGGAGGGQGAGAGQGAALRASRAP. Residues 32–49 form a helical; Signal-anchor for type II membrane protein membrane-spanning segment; that stretch reads MLLVALVLGAYCLCALPG. Residues 50-342 lie on the Lumenal side of the membrane; sequence RCPPAARAPA…QMTGQDFGWG (293 aa). The disordered stretch occupies residues 55-85; sequence ARAPAPAPAPSEPSSSVHRPGAPGLPLASGP. Residues 66–85 are compositionally biased toward low complexity; sequence EPSSSVHRPGAPGLPLASGP. 3'-phosphoadenylyl sulfate is bound at residue 100-104; that stretch reads KGGTR. Substrate is bound by residues 122-128 and 153-156; these read EPHFFDR and KTPS. 3'-phosphoadenylyl sulfate contacts are provided by arginine 181 and serine 189. 220–221 is a binding site for substrate; that stretch reads WS. Asparagine 281 is a glycosylation site (N-linked (GlcNAc...) asparagine). A disulfide bridge links cysteine 288 with cysteine 300. 305–309 is a 3'-phosphoadenylyl sulfate binding site; sequence KGRPH.

Belongs to the sulfotransferase 1 family.

The protein resides in the golgi apparatus membrane. The enzyme catalyses alpha-D-glucosaminyl-[heparan sulfate](n) + 3'-phosphoadenylyl sulfate = 3-sulfo-alpha-D-glucosaminyl-[heparan sulfate](n) + adenosine 3',5'-bisphosphate + H(+). Sulfotransferase that utilizes 3'-phospho-5'-adenylyl sulfate (PAPS) to catalyze the transfer of a sulfo group to heparan sulfate. The substrate-specific O-sulfation generates an enzyme-modified heparan sulfate which acts as a binding receptor to Herpes Simplex Virus-1 (HSV-1) and permits its entry. Unlike 3-OST-1, does not convert non-anticoagulant heparan sulfate to anticoagulant heparan sulfate. The chain is Heparan sulfate glucosamine 3-O-sulfotransferase 6 (HS3ST6) from Homo sapiens (Human).